The following is a 578-amino-acid chain: Arginine--tRNA ligase (578 aa).

The 'HIGH' region signature appears at 127 to 137; the sequence is PNLAKEMHVGH.

It belongs to the class-I aminoacyl-tRNA synthetase family. As to quaternary structure, monomer.

It localises to the cytoplasm. The enzyme catalyses tRNA(Arg) + L-arginine + ATP = L-arginyl-tRNA(Arg) + AMP + diphosphate. The polypeptide is Arginine--tRNA ligase (Pseudomonas fluorescens (strain Pf0-1)).